Reading from the N-terminus, the 316-residue chain is Cuticle collagen 13 (316 aa).

Residues 1–36 (MSEDLKQIAQETESLRKVAFFGIAVSTIATLTAIIA) form the signal peptide. Composition is skewed to low complexity over residues 127–157 (SGAAGPAGSPGQDGAPGNDGAPGAPGNPGQD) and 183–204 (APGQKGPSGAPGAPGQSGGAAL). The disordered stretch occupies residues 127-316 (SGAAGPAGSP…CPPPRTAPGY (190 aa)). Triple-helical region stretches follow at residues 128-157 (GAAGPAGSPGQDGAPGNDGAPGAPGNPGQD), 176-202 (GPPGPSGAPGQKGPSGAPGAPGQSGGA), 206-235 (GPPGPAGPPGPAGQPGSNGNAGAPGAPGQV), 240-266 (GTPGPAGPPGSPGPAGAPGQPGQAGSS), and 269-304 (GGPGPQGDAGAPGAPGAPGQAGAPGQDGESGSEGAC). The segment covering 205–217 (PGPPGPAGPPGPA) has biased composition (pro residues). A compositionally biased stretch (low complexity) spans 219–234 (QPGSNGNAGAPGAPGQ). Residues 241 to 251 (TPGPAGPPGSP) show a composition bias toward pro residues. Low complexity-rich tracts occupy residues 256 to 266 (APGQPGQAGSS) and 276 to 295 (DAGAPGAPGAPGQAGAPGQD). Pro residues predominate over residues 307-316 (CPPPRTAPGY).

It belongs to the cuticular collagen family. As to quaternary structure, collagen polypeptide chains are complexed within the cuticle by disulfide bonds and other types of covalent cross-links.

Functionally, nematode cuticles are composed largely of collagen-like proteins. The cuticle functions both as an exoskeleton and as a barrier to protect the worm from its environment. This is Cuticle collagen 13 (col-13) from Caenorhabditis elegans.